The chain runs to 437 residues: Chromosomal replication initiator protein DnaA (437 aa).

The tract at residues 1–82 (MIFPIWKKCL…KIIINIEKKK (82 aa)) is domain I, interacts with DnaA modulators. The domain II stretch occupies residues 82–101 (KLEKKKCIYKKKNIQIYLHS). A domain III, AAA+ region region spans residues 102-318 (EINKKYQFHN…GILKKIQILS (217 aa)). Positions 146, 148, 149, and 150 each coordinate ATP. Residues 319–437 (ILNKEKITIN…FIYLFNQLNA (119 aa)) form a domain IV, binds dsDNA region.

Belongs to the DnaA family. In terms of assembly, oligomerizes as a right-handed, spiral filament on DNA at oriC.

It is found in the cytoplasm. In terms of biological role, plays an essential role in the initiation and regulation of chromosomal replication. ATP-DnaA binds to the origin of replication (oriC) to initiate formation of the DNA replication initiation complex once per cell cycle. Binds the DnaA box (a 9 base pair repeat at the origin) and separates the double-stranded (ds)DNA. Forms a right-handed helical filament on oriC DNA; dsDNA binds to the exterior of the filament while single-stranded (ss)DNA is stabiized in the filament's interior. The ATP-DnaA-oriC complex binds and stabilizes one strand of the AT-rich DNA unwinding element (DUE), permitting loading of DNA polymerase. After initiation quickly degrades to an ADP-DnaA complex that is not apt for DNA replication. Binds acidic phospholipids. This Buchnera aphidicola subsp. Cinara cedri (strain Cc) protein is Chromosomal replication initiator protein DnaA.